The chain runs to 445 residues: Methionine aminopeptidase 2-1 (445 aa).

Residues 1 to 99 are disordered; it reads MAAQVPTEAL…FPNKAYPKGE (99 aa). The segment covering 61 to 75 has biased composition (basic residues); sequence KKKKKRKPKKKKKHP. His-198 lines the substrate pocket. Asp-218, Asp-229, and His-298 together coordinate a divalent metal cation. Position 306 (His-306) interacts with substrate. Residues Glu-331 and Glu-426 each contribute to the a divalent metal cation site.

The protein belongs to the peptidase M24A family. Methionine aminopeptidase eukaryotic type 2 subfamily. Co(2+) is required as a cofactor. The cofactor is Zn(2+). Mn(2+) serves as cofactor. It depends on Fe(2+) as a cofactor.

It localises to the cytoplasm. It carries out the reaction Release of N-terminal amino acids, preferentially methionine, from peptides and arylamides.. In terms of biological role, cotranslationally removes the N-terminal methionine from nascent proteins. The N-terminal methionine is often cleaved when the second residue in the primary sequence is small and uncharged (Met-Ala-, Cys, Gly, Pro, Ser, Thr, or Val). The polypeptide is Methionine aminopeptidase 2-1 (Fusarium vanettenii (strain ATCC MYA-4622 / CBS 123669 / FGSC 9596 / NRRL 45880 / 77-13-4) (Fusarium solani subsp. pisi)).